Consider the following 270-residue polypeptide: Phosphatidylglycerol--prolipoprotein diacylglyceryl transferase (270 aa).

Helical transmembrane passes span 19-39, 56-76, 92-112, and 116-136; these read FPVY…LWLA, LVLI…VIFE, QGGL…ILFA, and GVSF…GQAI. Arg138 lines the a 1,2-diacyl-sn-glycero-3-phospho-(1'-sn-glycerol) pocket. 3 consecutive transmembrane segments (helical) span residues 178–198, 206–226, and 236–256; these read HPTF…LLAL, GELF…VEGL, and LRIA…FIIV.

This sequence belongs to the Lgt family.

The protein localises to the cell membrane. It carries out the reaction L-cysteinyl-[prolipoprotein] + a 1,2-diacyl-sn-glycero-3-phospho-(1'-sn-glycerol) = an S-1,2-diacyl-sn-glyceryl-L-cysteinyl-[prolipoprotein] + sn-glycerol 1-phosphate + H(+). It participates in protein modification; lipoprotein biosynthesis (diacylglyceryl transfer). Functionally, catalyzes the transfer of the diacylglyceryl group from phosphatidylglycerol to the sulfhydryl group of the N-terminal cysteine of a prolipoprotein, the first step in the formation of mature lipoproteins. The protein is Phosphatidylglycerol--prolipoprotein diacylglyceryl transferase of Bacillus cereus (strain Q1).